A 177-amino-acid chain; its full sequence is Large ribosomal subunit protein uL6 (177 aa).

The protein belongs to the universal ribosomal protein uL6 family. Part of the 50S ribosomal subunit.

Its function is as follows. This protein binds to the 23S rRNA, and is important in its secondary structure. It is located near the subunit interface in the base of the L7/L12 stalk, and near the tRNA binding site of the peptidyltransferase center. This is Large ribosomal subunit protein uL6 from Ectopseudomonas mendocina (strain ymp) (Pseudomonas mendocina).